Reading from the N-terminus, the 387-residue chain is Cyclin-B1-4 (387 aa).

Residues 1 to 29 form a disordered region; the sequence is MASSRVSDLPHQRGIAGEIKPKNVAGHGR.

The protein belongs to the cyclin family. Cyclin AB subfamily.

This chain is Cyclin-B1-4 (CYCB1-4), found in Arabidopsis thaliana (Mouse-ear cress).